The primary structure comprises 413 residues: Multifunctional CCA protein (413 aa).

The ATP site is built by Gly8 and Arg11. Residues Gly8 and Arg11 each contribute to the CTP site. 2 residues coordinate Mg(2+): Asp21 and Asp23. The ATP site is built by Arg91, Arg143, and Arg146. Residues Arg91, Arg143, and Arg146 each coordinate CTP. The HD domain occupies 232-333 (TGVHVMMVID…VRLLERADAL (102 aa)).

Belongs to the tRNA nucleotidyltransferase/poly(A) polymerase family. Bacterial CCA-adding enzyme type 1 subfamily. Monomer. Can also form homodimers and oligomers. It depends on Mg(2+) as a cofactor. Requires Ni(2+) as cofactor.

The catalysed reaction is a tRNA precursor + 2 CTP + ATP = a tRNA with a 3' CCA end + 3 diphosphate. The enzyme catalyses a tRNA with a 3' CCA end + 2 CTP + ATP = a tRNA with a 3' CCACCA end + 3 diphosphate. Functionally, catalyzes the addition and repair of the essential 3'-terminal CCA sequence in tRNAs without using a nucleic acid template. Adds these three nucleotides in the order of C, C, and A to the tRNA nucleotide-73, using CTP and ATP as substrates and producing inorganic pyrophosphate. tRNA 3'-terminal CCA addition is required both for tRNA processing and repair. Also involved in tRNA surveillance by mediating tandem CCA addition to generate a CCACCA at the 3' terminus of unstable tRNAs. While stable tRNAs receive only 3'-terminal CCA, unstable tRNAs are marked with CCACCA and rapidly degraded. This Burkholderia pseudomallei (strain K96243) protein is Multifunctional CCA protein.